We begin with the raw amino-acid sequence, 426 residues long: Mitogen-activated protein kinase 8 (426 aa).

Residues 26–321 (YQNLKPIGSG…VDDALQHPYI (296 aa)) enclose the Protein kinase domain. ATP-binding positions include 33-38 (GSGAQG) and lysine 55. Aspartate 151 acts as the Proton acceptor in catalysis. Phosphothreonine is present on threonine 183. Positions 183 to 185 (TPY) match the TXY motif. At tyrosine 185 the chain carries Phosphotyrosine. Residues 375–426 (QPAPLGAAVTDGSQAHTSSSSGDASSMSTDPTLPSDTDSSLETSAGTLGCCR) are disordered. A compositionally biased stretch (low complexity) spans 384–404 (TDGSQAHTSSSSGDASSMSTD). Residues 405-420 (PTLPSDTDSSLETSAG) show a composition bias toward polar residues.

It belongs to the protein kinase superfamily. CMGC Ser/Thr protein kinase family. MAP kinase subfamily. The cofactor is Mg(2+). Post-translationally, dually phosphorylated on Thr-183 and Tyr-185, which activates the enzyme. Strongly expressed in presumptive ectoderm and mesoderm regions and weakly expressed in endoderm regions during early stages of embryo development. Expressed in the head and dorsal regions during neurula and tailbud stages.

The protein resides in the cytoplasm. It localises to the nucleus. It is found in the synapse. It carries out the reaction L-seryl-[protein] + ATP = O-phospho-L-seryl-[protein] + ADP + H(+). The enzyme catalyses L-threonyl-[protein] + ATP = O-phospho-L-threonyl-[protein] + ADP + H(+). Its activity is regulated as follows. Activated by threonine and tyrosine phosphorylation, potentially by the dual-specificity kinase, MKK7. Indirectly activated by Wnt5a. Responds to activation by environmental stress and pro-inflammatory cytokines by phosphorylating a number of transcription factors, and thus regulating transcriptional activity. Regulates morphogenic cell movements, controlling convergent extension during gastrulation. May play a role in the regulation of the circadian clock. This chain is Mitogen-activated protein kinase 8 (mapk8), found in Xenopus laevis (African clawed frog).